Consider the following 425-residue polypeptide: GTPase Obg (425 aa).

An Obg domain is found at Met-1 to Val-158. The 172-residue stretch at Ala-159–Arg-330 folds into the OBG-type G domain. GTP is bound by residues Gly-165–Ser-172, Phe-190–Thr-194, Asp-212–Gly-215, Asn-282–Asp-285, and Ser-311–Ala-313. Residues Ser-172 and Thr-192 each coordinate Mg(2+). Positions Val-345–Ala-422 constitute an OCT domain.

The protein belongs to the TRAFAC class OBG-HflX-like GTPase superfamily. OBG GTPase family. In terms of assembly, monomer. Requires Mg(2+) as cofactor.

The protein resides in the cytoplasm. Functionally, an essential GTPase which binds GTP, GDP and possibly (p)ppGpp with moderate affinity, with high nucleotide exchange rates and a fairly low GTP hydrolysis rate. Plays a role in control of the cell cycle, stress response, ribosome biogenesis and in those bacteria that undergo differentiation, in morphogenesis control. The polypeptide is GTPase Obg (Symbiobacterium thermophilum (strain DSM 24528 / JCM 14929 / IAM 14863 / T)).